The primary structure comprises 101 residues: Movement protein (101 aa).

Residues 30 to 50 (EVAILSFVALICIYLLYLWVL) traverse the membrane as a helical segment.

The protein belongs to the mastrevirus movement protein family. In terms of assembly, interacts with the capsid protein (CP). Part of a MP-CP-viral DNA complex.

The protein resides in the host membrane. Functionally, involved in the viral transport within, and between cells. In Maize streak virus genotype D (isolate Raw) (MSV), this protein is Movement protein.